We begin with the raw amino-acid sequence, 531 residues long: Membrane protein insertase YidC (531 aa).

4 helical membrane-spanning segments follow: residues 5-25, 343-363, 415-435, and 489-509; these read ALIAVVLSILFFYGYTALFSP, GNYGIAIIIITVIIKVIFYPL, LPMLVQIPVFFALYKALMFSI, and PVVFTFMFLNFPSGLVLYWLV.

The protein belongs to the OXA1/ALB3/YidC family. Type 1 subfamily. Interacts with the Sec translocase complex via SecD. Specifically interacts with transmembrane segments of nascent integral membrane proteins during membrane integration.

It localises to the cell inner membrane. Functionally, required for the insertion and/or proper folding and/or complex formation of integral membrane proteins into the membrane. Involved in integration of membrane proteins that insert both dependently and independently of the Sec translocase complex, as well as at least some lipoproteins. Aids folding of multispanning membrane proteins. This chain is Membrane protein insertase YidC, found in Geobacter sulfurreducens (strain ATCC 51573 / DSM 12127 / PCA).